A 115-amino-acid chain; its full sequence is Probable prefoldin subunit 1 (115 aa).

This sequence belongs to the prefoldin subunit beta family. Heterohexamer of two PFD-alpha type and four PFD-beta type subunits.

Its function is as follows. Binds specifically to cytosolic chaperonin (c-CPN) and transfers target proteins to it. Binds to nascent polypeptide chain and promotes folding in an environment in which there are many competing pathways for nonnative proteins. The protein is Probable prefoldin subunit 1 (pfdn1) of Dictyostelium discoideum (Social amoeba).